Here is a 661-residue protein sequence, read N- to C-terminus: Probable urea active transporter 3 (661 aa).

Transmembrane regions (helical) follow at residues 13–33 (GIVIGLGFAFAIVMILVTYVL), 56–76 (GLISSAVVSSWTWPGTLLTSA), 86–106 (GSMWYSFAFTVQITFFTVIAL), 132–152 (AVFLFYALGTNIIVSAMLLLG), 165–185 (VVAAGFLLPLGVWLYTVSGGL), 197–217 (VIVYIVILITLFVAYTSSVHI), 251–271 (AVFVGWNIVIGGFATVFCDPS), 288–308 (YFAGGLAWLIVPWAMGSAAAL), 352–372 (AGVLILFMASTSATSAELVAF), 397–417 (VTHVFVTIFAVCMGALAVLFN), 419–439 (IGITISWIITFIGIALGPAVF), 454–474 (GMIIGCPMGSITGVVCWVGSC), 495–515 (VGNFTGLFSGLIYIVLISYFF), 556–576 (IGIFVSWIIFFILVIIVPLPM), and 591–611 (WIIVIIIWTLIAALYITFYPL).

It belongs to the sodium:solute symporter (SSF) (TC 2.A.21) family.

It localises to the membrane. The protein localises to the golgi apparatus membrane. Functionally, involved in active transport of urea. The sequence is that of Probable urea active transporter 3 (dur3-3) from Schizosaccharomyces pombe (strain 972 / ATCC 24843) (Fission yeast).